A 189-amino-acid polypeptide reads, in one-letter code: Parkinson disease protein 7 (189 aa).

N-acetylalanine is present on Ala-2. 2 S-palmitoyl cysteine lipidation sites follow: Cys-46 and Cys-53. Tyr-67 is modified (phosphotyrosine). Cys-106 serves as the catalytic Nucleophile. Cys-106 carries the post-translational modification Cysteine sulfinic acid (-SO2H); alternate. Cys-106 carries S-palmitoyl cysteine; alternate lipidation. His-126 is an active-site residue. Residue Lys-130 forms a Glycyl lysine isopeptide (Lys-Gly) (interchain with G-Cter in SUMO) linkage. N6-acetyllysine is present on Lys-148. Lys-182 is modified (N6-succinyllysine).

This sequence belongs to the peptidase C56 family. Homodimer. Binds EFCAB6/DJBP and PIAS2. Part of a ternary complex containing PARK7, EFCAB6/DJBP and AR. Interacts (via N-terminus) with OTUD7B. Interacts with BBS1, HIPK1, CLCF1 and MTERF. Forms a complex with PINK1 and PRKN. Interacts (via C-terminus) with NCF1; the interaction is enhanced by LPS and modulates NCF1 phosphorylation and membrane translocation. Interacts with NENF. The cofactor is Deglycase activity does not require glutathione as a cofactor, however, glycated glutathione constitutes a PARK7 substrate.. Sumoylated on Lys-130 by PIAS2 or PIAS4; which is enhanced after ultraviolet irradiation and essential for cell-growth promoting activity and transforming activity. Post-translationally, cys-106 is easily oxidized to sulfinic acid. In terms of processing, undergoes cleavage of a C-terminal peptide and subsequent activation of protease activity in response to oxidative stress. In terms of tissue distribution, highly expressed in pancreas, kidney, skeletal muscle, liver, testis and heart. Detected at slightly lower levels in placenta and brain (at protein level). Detected in astrocytes, Sertoli cells, spermatogonia, spermatids and spermatozoa. Expressed by pancreatic islets at higher levels than surrounding exocrine tissues.

The protein localises to the cell membrane. It localises to the cytoplasm. It is found in the nucleus. Its subcellular location is the membrane raft. The protein resides in the mitochondrion. The protein localises to the endoplasmic reticulum. It catalyses the reaction N(omega)-(1-hydroxy-2-oxopropyl)-L-arginyl-[protein] + H2O = lactate + L-arginyl-[protein] + H(+). The catalysed reaction is N(6)-(1-hydroxy-2-oxopropyl)-L-lysyl-[protein] + H2O = lactate + L-lysyl-[protein] + H(+). It carries out the reaction S-(1-hydroxy-2-oxopropyl)-L-cysteinyl-[protein] + H2O = lactate + L-cysteinyl-[protein] + H(+). The enzyme catalyses N(omega)-(1-hydroxy-2-oxoethyl)-L-arginyl-[protein] + H2O = L-arginyl-[protein] + glycolate + H(+). It catalyses the reaction N(6)-(1-hydroxy-2-oxoethyl)-L-lysyl-[protein] + H2O = glycolate + L-lysyl-[protein] + H(+). The catalysed reaction is S-(1-hydroxy-2-oxoethyl)-L-cysteinyl-[protein] + H2O = glycolate + L-cysteinyl-[protein] + H(+). It carries out the reaction N(2)-(1-hydroxy-2-oxopropyl)-dGTP + H2O = lactate + dGTP + H(+). The enzyme catalyses N(2)-(1-hydroxy-2-oxopropyl)-GTP + H2O = lactate + GTP + H(+). It catalyses the reaction N(2)-(1-hydroxy-2-oxopropyl)-GDP + H2O = lactate + GDP + H(+). The catalysed reaction is N(2)-(1-hydroxy-2-oxopropyl)-GMP + H2O = lactate + GMP + H(+). It carries out the reaction N(2)-(1-hydroxy-2-oxoethyl)-dGTP + H2O = dGTP + glycolate + H(+). The enzyme catalyses N(2)-(1-hydroxy-2-oxoethyl)-GTP + H2O = glycolate + GTP + H(+). It catalyses the reaction N(2)-(1-hydroxy-2-oxoethyl)-GDP + H2O = glycolate + GDP + H(+). The catalysed reaction is N(2)-(1-hydroxy-2-oxoethyl)-GMP + H2O = glycolate + GMP + H(+). It carries out the reaction an N(2)-(1-hydroxy-2-oxopropyl)-guanosine in RNA + H2O = a guanosine in RNA + lactate + H(+). The enzyme catalyses an N(2)-(1-hydroxy-2-oxopropyl)-2'-deoxyguanosine in DNA + H2O = a 2'-deoxyguanosine in DNA + lactate + H(+). It catalyses the reaction an N(2)-(1-hydroxy-2-oxoethyl)-guanosine in RNA + H2O = a guanosine in RNA + glycolate + H(+). The catalysed reaction is an N(2)-(1-hydroxy-2-oxoethyl)-2'-deoxyguanosine in DNA + H2O = a 2'-deoxyguanosine in DNA + glycolate + H(+). In terms of biological role, multifunctional protein with controversial molecular function which plays an important role in cell protection against oxidative stress and cell death acting as oxidative stress sensor and redox-sensitive chaperone and protease. It is involved in neuroprotective mechanisms like the stabilization of NFE2L2 and PINK1 proteins, male fertility as a positive regulator of androgen signaling pathway as well as cell growth and transformation through, for instance, the modulation of NF-kappa-B signaling pathway. Has been described as a protein and nucleotide deglycase that catalyzes the deglycation of the Maillard adducts formed between amino groups of proteins or nucleotides and reactive carbonyl groups of glyoxals. But this function is rebuted by other works. As a protein deglycase, repairs methylglyoxal- and glyoxal-glycated proteins, and releases repaired proteins and lactate or glycolate, respectively. Deglycates cysteine, arginine and lysine residues in proteins, and thus reactivates these proteins by reversing glycation by glyoxals. Acts on early glycation intermediates (hemithioacetals and aminocarbinols), preventing the formation of advanced glycation endproducts (AGE) that cause irreversible damage. Also functions as a nucleotide deglycase able to repair glycated guanine in the free nucleotide pool (GTP, GDP, GMP, dGTP) and in DNA and RNA. Is thus involved in a major nucleotide repair system named guanine glycation repair (GG repair), dedicated to reversing methylglyoxal and glyoxal damage via nucleotide sanitization and direct nucleic acid repair. Protects histones from adduction by methylglyoxal, controls the levels of methylglyoxal-derived argininine modifications on chromatin. Able to remove the glycations and restore histone 3, histone glycation disrupts both local and global chromatin architecture by altering histone-DNA interactions as well as histone acetylation and ubiquitination levels. Displays a very low glyoxalase activity that may reflect its deglycase activity. Eliminates hydrogen peroxide and protects cells against hydrogen peroxide-induced cell death. Required for correct mitochondrial morphology and function as well as for autophagy of dysfunctional mitochondria. Plays a role in regulating expression or stability of the mitochondrial uncoupling proteins SLC25A14 and SLC25A27 in dopaminergic neurons of the substantia nigra pars compacta and attenuates the oxidative stress induced by calcium entry into the neurons via L-type channels during pacemaking. Regulates astrocyte inflammatory responses, may modulate lipid rafts-dependent endocytosis in astrocytes and neuronal cells. In pancreatic islets, involved in the maintenance of mitochondrial reactive oxygen species (ROS) levels and glucose homeostasis in an age- and diet dependent manner. Protects pancreatic beta cells from cell death induced by inflammatory and cytotoxic setting. Binds to a number of mRNAs containing multiple copies of GG or CC motifs and partially inhibits their translation but dissociates following oxidative stress. Metal-binding protein able to bind copper as well as toxic mercury ions, enhances the cell protection mechanism against induced metal toxicity. In macrophages, interacts with the NADPH oxidase subunit NCF1 to direct NADPH oxidase-dependent ROS production, and protects against sepsis. The chain is Parkinson disease protein 7 from Homo sapiens (Human).